The chain runs to 224 residues: UPF0758 protein Pfl01_5539 (224 aa).

Residues 102–224 form the MPN domain; it reads ALENPQVVRD…PLSMAECGWM (123 aa). The Zn(2+) site is built by His-173, His-175, and Asp-186. The short motif at 173 to 186 is the JAMM motif element; that stretch reads HNHPSGNSDPSQAD.

It belongs to the UPF0758 family.

This Pseudomonas fluorescens (strain Pf0-1) protein is UPF0758 protein Pfl01_5539.